Consider the following 620-residue polypeptide: 1-deoxy-D-xylulose-5-phosphate synthase (620 aa).

Residues histidine 80 and 121–123 (GHS) contribute to the thiamine diphosphate site. Residue aspartate 152 coordinates Mg(2+). Residues 153 to 154 (GA), asparagine 181, tyrosine 288, and glutamate 370 each bind thiamine diphosphate. Asparagine 181 is a binding site for Mg(2+).

It belongs to the transketolase family. DXPS subfamily. In terms of assembly, homodimer. Mg(2+) is required as a cofactor. Thiamine diphosphate serves as cofactor.

The enzyme catalyses D-glyceraldehyde 3-phosphate + pyruvate + H(+) = 1-deoxy-D-xylulose 5-phosphate + CO2. The protein operates within metabolic intermediate biosynthesis; 1-deoxy-D-xylulose 5-phosphate biosynthesis; 1-deoxy-D-xylulose 5-phosphate from D-glyceraldehyde 3-phosphate and pyruvate: step 1/1. Catalyzes the acyloin condensation reaction between C atoms 2 and 3 of pyruvate and glyceraldehyde 3-phosphate to yield 1-deoxy-D-xylulose-5-phosphate (DXP). The polypeptide is 1-deoxy-D-xylulose-5-phosphate synthase (Escherichia coli (strain SMS-3-5 / SECEC)).